The following is a 272-amino-acid chain: Glycerol-3-phosphate acyltransferase (272 aa).

Transmembrane regions (helical) follow at residues 9-29 (IIIL…GILI), 60-80 (AIVM…CLLI), 99-119 (VIIY…CFYF), 149-169 (ASIS…ICLI), 173-193 (VSLA…IPHL), and 226-246 (LNWW…VLVI).

The protein belongs to the PlsY family. Probably interacts with PlsX.

It localises to the cell membrane. The catalysed reaction is an acyl phosphate + sn-glycerol 3-phosphate = a 1-acyl-sn-glycero-3-phosphate + phosphate. It participates in lipid metabolism; phospholipid metabolism. Its function is as follows. Catalyzes the transfer of an acyl group from acyl-phosphate (acyl-PO(4)) to glycerol-3-phosphate (G3P) to form lysophosphatidic acid (LPA). This enzyme utilizes acyl-phosphate as fatty acyl donor, but not acyl-CoA or acyl-ACP. In Malacoplasma penetrans (strain HF-2) (Mycoplasma penetrans), this protein is Glycerol-3-phosphate acyltransferase.